Here is a 130-residue protein sequence, read N- to C-terminus: Holo-[acyl-carrier-protein] synthase (130 aa).

2 residues coordinate Mg(2+): aspartate 8 and glutamate 62.

The protein belongs to the P-Pant transferase superfamily. AcpS family. It depends on Mg(2+) as a cofactor.

It is found in the cytoplasm. The catalysed reaction is apo-[ACP] + CoA = holo-[ACP] + adenosine 3',5'-bisphosphate + H(+). Functionally, transfers the 4'-phosphopantetheine moiety from coenzyme A to a Ser of acyl-carrier-protein. The protein is Holo-[acyl-carrier-protein] synthase of Herminiimonas arsenicoxydans.